Consider the following 622-residue polypeptide: Low affinity potassium transport system protein Kup (622 aa).

12 helical membrane-spanning segments follow: residues 9-29 (LPAI…TSPL), 49-69 (VFGF…IKYL), 103-123 (VIMG…TPAI), 137-157 (PQLD…LFMI), 165-185 (VGKL…VLGL), 213-233 (VSFI…ALYA), 247-267 (WFTV…ALLL), 276-296 (PFFL…AALA), 337-357 (IYIP…IVSF), 363-383 (LAAA…ILST), 396-416 (LVAL…SANL), and 419-439 (LLSG…IMTT).

The protein belongs to the HAK/KUP transporter (TC 2.A.72) family.

The protein localises to the cell inner membrane. It catalyses the reaction K(+)(in) + H(+)(in) = K(+)(out) + H(+)(out). Responsible for the low-affinity transport of potassium into the cell. Likely operates as a K(+):H(+) symporter. The polypeptide is Low affinity potassium transport system protein Kup (Salmonella arizonae (strain ATCC BAA-731 / CDC346-86 / RSK2980)).